Consider the following 185-residue polypeptide: Lysozyme g (185 aa).

Glutamate 73 is an active-site residue.

The protein belongs to the glycosyl hydrolase 23 family.

The enzyme catalyses Hydrolysis of (1-&gt;4)-beta-linkages between N-acetylmuramic acid and N-acetyl-D-glucosamine residues in a peptidoglycan and between N-acetyl-D-glucosamine residues in chitodextrins.. The sequence is that of Lysozyme g from Cyprinus carpio (Common carp).